Here is a 158-residue protein sequence, read N- to C-terminus: uncharacterized protein (158 aa).

The next 4 helical transmembrane spans lie at 42 to 62, 71 to 91, 102 to 122, and 130 to 150; these read FHFAVIVITMLAYLSAFGFLY, WIFIGFLGSMVINAIFPHLIA, LLTGLLLNIPVNSLVIYQMFL, and ELIISTLVVGIILLALIPLLF.

Its subcellular location is the cell membrane. This is an uncharacterized protein from Bacillus subtilis (strain 168).